Reading from the N-terminus, the 464-residue chain is Argininosuccinate lyase (464 aa).

The protein belongs to the lyase 1 family. Argininosuccinate lyase subfamily.

It localises to the cytoplasm. The enzyme catalyses 2-(N(omega)-L-arginino)succinate = fumarate + L-arginine. The protein operates within amino-acid biosynthesis; L-arginine biosynthesis; L-arginine from L-ornithine and carbamoyl phosphate: step 3/3. This is Argininosuccinate lyase from Crocosphaera subtropica (strain ATCC 51142 / BH68) (Cyanothece sp. (strain ATCC 51142)).